Consider the following 292-residue polypeptide: 4-hydroxy-tetrahydrodipicolinate synthase (292 aa).

Threonine 45 lines the pyruvate pocket. Tyrosine 133 functions as the Proton donor/acceptor in the catalytic mechanism. Lysine 161 (schiff-base intermediate with substrate) is an active-site residue. Isoleucine 203 is a binding site for pyruvate.

It belongs to the DapA family. Homotetramer; dimer of dimers.

The protein localises to the cytoplasm. It carries out the reaction L-aspartate 4-semialdehyde + pyruvate = (2S,4S)-4-hydroxy-2,3,4,5-tetrahydrodipicolinate + H2O + H(+). Its pathway is amino-acid biosynthesis; L-lysine biosynthesis via DAP pathway; (S)-tetrahydrodipicolinate from L-aspartate: step 3/4. Catalyzes the condensation of (S)-aspartate-beta-semialdehyde [(S)-ASA] and pyruvate to 4-hydroxy-tetrahydrodipicolinate (HTPA). This is 4-hydroxy-tetrahydrodipicolinate synthase from Vibrio vulnificus (strain YJ016).